The primary structure comprises 279 residues: Thymidylate synthase (279 aa).

141 to 142 (RR) is a binding site for dUMP. Cys161 acts as the Nucleophile in catalysis. Residues 181-184 (RSND), Asn192, and 222-224 (HVY) contribute to the dUMP site. Asp184 lines the (6R)-5,10-methylene-5,6,7,8-tetrahydrofolate pocket. A (6R)-5,10-methylene-5,6,7,8-tetrahydrofolate-binding site is contributed by Ala278.

This sequence belongs to the thymidylate synthase family. Bacterial-type ThyA subfamily. Homodimer.

Its subcellular location is the cytoplasm. The catalysed reaction is dUMP + (6R)-5,10-methylene-5,6,7,8-tetrahydrofolate = 7,8-dihydrofolate + dTMP. The protein operates within pyrimidine metabolism; dTTP biosynthesis. Functionally, catalyzes the reductive methylation of 2'-deoxyuridine-5'-monophosphate (dUMP) to 2'-deoxythymidine-5'-monophosphate (dTMP) while utilizing 5,10-methylenetetrahydrofolate (mTHF) as the methyl donor and reductant in the reaction, yielding dihydrofolate (DHF) as a by-product. This enzymatic reaction provides an intracellular de novo source of dTMP, an essential precursor for DNA biosynthesis. In Bacillus mojavensis, this protein is Thymidylate synthase.